The primary structure comprises 617 residues: 1-deoxy-D-xylulose-5-phosphate synthase (617 aa).

Thiamine diphosphate contacts are provided by residues histidine 77 and 118–120 (GHS). A Mg(2+)-binding site is contributed by aspartate 149. Thiamine diphosphate is bound by residues 150–151 (GA), asparagine 178, tyrosine 287, and glutamate 368. Residue asparagine 178 coordinates Mg(2+).

The protein belongs to the transketolase family. DXPS subfamily. Homodimer. The cofactor is Mg(2+). It depends on thiamine diphosphate as a cofactor.

The catalysed reaction is D-glyceraldehyde 3-phosphate + pyruvate + H(+) = 1-deoxy-D-xylulose 5-phosphate + CO2. Its pathway is metabolic intermediate biosynthesis; 1-deoxy-D-xylulose 5-phosphate biosynthesis; 1-deoxy-D-xylulose 5-phosphate from D-glyceraldehyde 3-phosphate and pyruvate: step 1/1. Its function is as follows. Catalyzes the acyloin condensation reaction between C atoms 2 and 3 of pyruvate and glyceraldehyde 3-phosphate to yield 1-deoxy-D-xylulose-5-phosphate (DXP). This is 1-deoxy-D-xylulose-5-phosphate synthase from Haemophilus ducreyi (strain 35000HP / ATCC 700724).